Here is a 121-residue protein sequence, read N- to C-terminus: Small ribosomal subunit protein uS13 (121 aa).

Positions 89-121 (RRHRMSLPVRGQRTRTNARTRRGSRKTVAGRKK) are disordered. Residues 100 to 121 (QRTRTNARTRRGSRKTVAGRKK) show a composition bias toward basic residues.

It belongs to the universal ribosomal protein uS13 family. In terms of assembly, part of the 30S ribosomal subunit. Forms a loose heterodimer with protein S19. Forms two bridges to the 50S subunit in the 70S ribosome.

Functionally, located at the top of the head of the 30S subunit, it contacts several helices of the 16S rRNA. In the 70S ribosome it contacts the 23S rRNA (bridge B1a) and protein L5 of the 50S subunit (bridge B1b), connecting the 2 subunits; these bridges are implicated in subunit movement. Contacts the tRNAs in the A and P-sites. This Prochlorococcus marinus subsp. pastoris (strain CCMP1986 / NIES-2087 / MED4) protein is Small ribosomal subunit protein uS13.